The sequence spans 209 residues: Protein-L-isoaspartate O-methyltransferase (209 aa).

Residue S59 is part of the active site.

Belongs to the methyltransferase superfamily. L-isoaspartyl/D-aspartyl protein methyltransferase family.

Its subcellular location is the cytoplasm. The enzyme catalyses [protein]-L-isoaspartate + S-adenosyl-L-methionine = [protein]-L-isoaspartate alpha-methyl ester + S-adenosyl-L-homocysteine. Catalyzes the methyl esterification of L-isoaspartyl residues in peptides and proteins that result from spontaneous decomposition of normal L-aspartyl and L-asparaginyl residues. It plays a role in the repair and/or degradation of damaged proteins. The sequence is that of Protein-L-isoaspartate O-methyltransferase from Helicobacter pylori (strain P12).